The following is a 338-amino-acid chain: Ketol-acid reductoisomerase (NADP(+)) (338 aa).

A KARI N-terminal Rossmann domain is found at 1–181 (MQIYYDKDAD…GGGRAGIIET (181 aa)). Residues 24-27 (YGSQ), arginine 47, serine 50, serine 52, and 82-85 (DEHQ) contribute to the NADP(+) site. Histidine 107 is a catalytic residue. Glycine 133 contributes to the NADP(+) binding site. Positions 182 to 327 (TFREETETDL…ARLRDMMPWI (146 aa)) constitute a KARI C-terminal knotted domain. Mg(2+) contacts are provided by aspartate 190, glutamate 194, glutamate 226, and glutamate 230. Position 251 (serine 251) interacts with substrate.

Belongs to the ketol-acid reductoisomerase family. The cofactor is Mg(2+).

The enzyme catalyses (2R)-2,3-dihydroxy-3-methylbutanoate + NADP(+) = (2S)-2-acetolactate + NADPH + H(+). It carries out the reaction (2R,3R)-2,3-dihydroxy-3-methylpentanoate + NADP(+) = (S)-2-ethyl-2-hydroxy-3-oxobutanoate + NADPH + H(+). It functions in the pathway amino-acid biosynthesis; L-isoleucine biosynthesis; L-isoleucine from 2-oxobutanoate: step 2/4. The protein operates within amino-acid biosynthesis; L-valine biosynthesis; L-valine from pyruvate: step 2/4. Involved in the biosynthesis of branched-chain amino acids (BCAA). Catalyzes an alkyl-migration followed by a ketol-acid reduction of (S)-2-acetolactate (S2AL) to yield (R)-2,3-dihydroxy-isovalerate. In the isomerase reaction, S2AL is rearranged via a Mg-dependent methyl migration to produce 3-hydroxy-3-methyl-2-ketobutyrate (HMKB). In the reductase reaction, this 2-ketoacid undergoes a metal-dependent reduction by NADPH to yield (R)-2,3-dihydroxy-isovalerate. This chain is Ketol-acid reductoisomerase (NADP(+)), found in Methylococcus capsulatus (strain ATCC 33009 / NCIMB 11132 / Bath).